The chain runs to 266 residues: Putative carbamate hydrolase RutD (266 aa).

One can recognise an AB hydrolase-1 domain in the interval 14 to 115 (PVVVLISGLG…TVLISVNGWL (102 aa)).

It belongs to the AB hydrolase superfamily. Hydrolase RutD family.

It carries out the reaction carbamate + 2 H(+) = NH4(+) + CO2. Its function is as follows. Involved in pyrimidine catabolism. May facilitate the hydrolysis of carbamate, a reaction that can also occur spontaneously. The chain is Putative carbamate hydrolase RutD from Shigella sonnei (strain Ss046).